The following is a 174-amino-acid chain: N-terminal acetyltransferase B complex catalytic subunit NAA20 (174 aa).

One can recognise an N-acetyltransferase domain in the interval 2–151 (TTIRRFSCND…DGLDMRKALS (150 aa)).

This sequence belongs to the acetyltransferase family. ARD1 subfamily.

The enzyme catalyses N-terminal L-methionyl-L-asparaginyl-[protein] + acetyl-CoA = N-terminal N(alpha)-acetyl-L-methionyl-L-asparaginyl-[protein] + CoA + H(+). It carries out the reaction N-terminal L-methionyl-L-glutaminyl-[protein] + acetyl-CoA = N-terminal N(alpha)-acetyl-L-methionyl-L-glutaminyl-[protein] + CoA + H(+). It catalyses the reaction N-terminal L-methionyl-L-aspartyl-[protein] + acetyl-CoA = N-terminal N(alpha)-acetyl-L-methionyl-L-aspartyl-[protein] + CoA + H(+). The catalysed reaction is N-terminal L-methionyl-L-glutamyl-[protein] + acetyl-CoA = N-terminal N(alpha)-acetyl-L-methionyl-L-glutamyl-[protein] + CoA + H(+). Functionally, catalytic subunit of the NatB N-alpha-acetyltransferase complex. Involved in plant immunity through the regulation of SNC1 stability. This chain is N-terminal acetyltransferase B complex catalytic subunit NAA20, found in Arabidopsis thaliana (Mouse-ear cress).